Consider the following 258-residue polypeptide: 5'-nucleotidase SurE (258 aa).

The a divalent metal cation site is built by Asp-8, Asp-9, Ser-40, and Asn-98.

This sequence belongs to the SurE nucleotidase family. A divalent metal cation is required as a cofactor.

It localises to the cytoplasm. The catalysed reaction is a ribonucleoside 5'-phosphate + H2O = a ribonucleoside + phosphate. Its function is as follows. Nucleotidase that shows phosphatase activity on nucleoside 5'-monophosphates. The sequence is that of 5'-nucleotidase SurE from Synechococcus elongatus (strain ATCC 33912 / PCC 7942 / FACHB-805) (Anacystis nidulans R2).